The sequence spans 485 residues: Protein hunchback (485 aa).

The disordered stretch occupies residues 1–77 (TSSTARKTPE…EEDDDIRTPK (77 aa)). Residues 16–37 (QDQNQLLKTPIQTNGNQQSTFD) show a composition bias toward polar residues. A compositionally biased stretch (acidic residues) spans 59 to 72 (ADVDDENDAEEDDD). 4 consecutive C2H2-type zinc fingers follow at residues 87–109 (YKCK…NRIH), 116–138 (LKCQ…LRNH), 144–166 (FQCK…MKSH), and 172–196 (YRCK…KYSH). 3 disordered regions span residues 229 to 270 (KDEG…PPSS), 318 to 361 (NGWQ…QVKH), and 398 to 422 (PKPV…EDDS). Over residues 257 to 270 (NFEQSQHVPTPPSS) the composition is skewed to polar residues. A compositionally biased stretch (acidic residues) spans 325 to 335 (NCNEEETPEKE). Residues 345 to 358 (DLSSNPSTPSTVSQ) show a composition bias toward polar residues. Residues 402 to 416 (QLQLPTSSTTTPLKT) show a composition bias toward low complexity. C2H2-type zinc fingers lie at residues 432–454 (YECK…MGYH) and 460–484 (FKCN…RDAH).

The protein belongs to the hunchback C2H2-type zinc-finger protein family.

The protein resides in the nucleus. Its function is as follows. Gap class segmentation protein that controls development of head structures. This is Protein hunchback (hb) from Clogmia albipunctata (Mothmidge).